A 759-amino-acid polypeptide reads, in one-letter code: MRYNQYSYTKASEEVMLDELARLGFTIQTTNSPKENLHHFLQKILFRYQDVNYVLSSWVADQKTDLLTFFQSDKQLTEEVFYTVALQVLGFAPFVDFDDVTAFCKEIHFPITYGNILENLYQLLNTRTKLGNTLIDQLVSEGFIPESNDYHFFNGKSLATFSSHEAIREVVYVESRVDTDGDGKPDLVKVSIIRPSYEGQVPAVMTASPYHQGTNDKASDKALHNMNVDLSCKNPRTITVQESSIQTIEPQGQASLVEKAEEKLGHIGSYTLNDYLLPRGFANLYVSGVGTKDSEGMMTSGDYQQIEAYKNVIDWLNGRCRAFTDHTRQREIKATWSNGKVATTGISYLGTMSNGLATTGVDGLEVIIAEAGISSWYNYYRENGLVTSPGGYPGEDFESLTELTYSRNLLAGEYLRHNQAYQAYLDQQRKDLERETGDYNQFWHDRNYLIHADKVKAEVVFTHGSQDWNVKPLHVYNMFHALPAHIKKHLFFHNGAHVYINNWQSIDFRESMNALLSKKLLGHSSDFDLPPVIWQDNSQAQNWMSLDDFGNQEDYSHFHLGKGSQEIRNRYSDEDYNRFAKSYQVFKNELFEGKTQQITLDWTLEQDLFINGPAKLKLRLKSSTNKGLISAQLLDYGPAKRLTPIPSLLEPRVMDNGRYYMLDNLMELPFADTPHRVITKGFLNLQNRTDLLTVEEVVPNQWMELSFELQPTIYKLKKGDQLRLVLYTTDFEHTVRDKTDYHLSVDMEHSSLSLPHKKS.

Active-site charge relay system residues include Ser-347, Asp-467, and His-497.

It belongs to the peptidase S15 family. In terms of assembly, homodimer.

Its subcellular location is the secreted. The catalysed reaction is Hydrolyzes Xaa-Pro-|- bonds to release unblocked, N-terminal dipeptides from substrates including Ala-Pro-|-p-nitroanilide and (sequentially) Tyr-Pro-|-Phe-Pro-|-Gly-Pro-|-Ile.. Removes N-terminal dipeptides sequentially from polypeptides having unsubstituted N-termini provided that the penultimate residue is proline. This chain is Xaa-Pro dipeptidyl-peptidase (pepX), found in Streptococcus gordonii.